We begin with the raw amino-acid sequence, 239 residues long: Ribonuclease HII (239 aa).

Residues Lys18–Glu231 enclose the RNase H type-2 domain. A divalent metal cation-binding residues include Asp24, Glu25, and Asp125.

Belongs to the RNase HII family. Requires Mn(2+) as cofactor. The cofactor is Mg(2+).

It localises to the cytoplasm. The enzyme catalyses Endonucleolytic cleavage to 5'-phosphomonoester.. Its function is as follows. Endonuclease that specifically degrades the RNA of RNA-DNA hybrids. This chain is Ribonuclease HII, found in Methanococcus maripaludis (strain C6 / ATCC BAA-1332).